The primary structure comprises 678 residues: MKASLLVPRRALLFGQLLPPKYSWYSVKRWQSQLTFRNKSKRNTNRIMLSVVSSLNPDSLIAPLLCVSLDNRKYLIGSMGELTQMKFRSQASNYGGKSVSVFLMPPSLQSLNAWGITAGLFGYLQSSGIQNTWGLHAPKPVISIIKKSHHLFSGSPLRLDLNSFSSEDNADATNSFYLDEPEFCTIKGNIYSNWSFLSFNSKEAAGVFNADKALALGVPFGPSNGKLCAGEAVLSKDGTTWIYPHQVVGPPRKRQYFYVLGCSSLSALNQMSKHVDSFSDVYPTCIIHILEKGIWGPEYIKFLSHPKFSRAQHFISCIELASNNPVFQRNKGRNVLPACRDFAAFDIKPSTLDTQTQLPENTYVLKEETSMVLYDEQCKISESPSYSPVKLAKKFSSFNPLPFENEGYTLDVLGTSATCPTWRRSLSSYSVAIDGTVIMLDCGEGAISQFFRQYGTNTEPMLRKLKAIFITHLHSDHYLGLLNVLQAWNKANTNNSMHINIIGPKFLWQWLQRLKSPANLQALLNRIIFIIAKETVTTPLQLTSDLSISSVPSIHINDSYSCIISHTKYGKLVYSGDTRPNEKLVKAGIGASLLLHESTFEDDLKHEAIQRQHSTASEALSVAQSMKAKALILTHFSQRSYDADFLPPDWTIYPKSKTIYANDGLQWQQFQSKQRETI.

A mitochondrion-targeting transit peptide spans 1–37 (MKASLLVPRRALLFGQLLPPKYSWYSVKRWQSQLTFR).

The protein belongs to the RNase Z family. Zn(2+) serves as cofactor.

It is found in the mitochondrion. The protein resides in the cytoplasm. It catalyses the reaction Endonucleolytic cleavage of RNA, removing extra 3' nucleotides from tRNA precursor, generating 3' termini of tRNAs. A 3'-hydroxy group is left at the tRNA terminus and a 5'-phosphoryl group is left at the trailer molecule.. Functionally, zinc phosphodiesterase, which displays some tRNA 3'-processing endonuclease activity. May be involved in tRNA maturation, by removing a 3'-trailer from precursor tRNA. This is Ribonuclease Z 2, mitochondrial (trz2) from Schizosaccharomyces pombe (strain 972 / ATCC 24843) (Fission yeast).